The sequence spans 4835 residues: Midasin (4835 aa).

AAA-ATPase protomer regions lie at residues 12 to 161 (EVLR…PLVL), 324 to 689 (RSLD…HRFR), 797 to 1049 (MTTI…AEII), 1096 to 1375 (KFQD…DYIT), 1489 to 1738 (APTT…FGYR), and 1821 to 2110 (ALEA…SIDI). ATP contacts are provided by residues 31-38 (GPSASGRT), 356-363 (GPTGIGKT), 814-821 (GTTSSGKT), 1127-1134 (GVSGAGKT), 1513-1520 (GDPGVGKS), and 1839-1846 (GSPESGKS). A linker region spans residues 2197-4058 (SVFIASTLNA…DGTGDQNVSK (1862 aa)). 2 disordered regions span residues 4033–4056 (DQKE…DQNV) and 4108–4523 (IEEE…LLNP). Composition is skewed to acidic residues over residues 4109-4133 (EEED…QGEA), 4141-4150 (EDDDSAEEYS), 4226-4241 (ADGE…EEEQ), 4282-4291 (VDIDDNEASD), and 4315-4330 (NDEE…DQEN). Residues 4331 to 4346 (ITDSNPDANEVGTNDQ) are compositionally biased toward polar residues. Composition is skewed to basic and acidic residues over residues 4347 to 4360 (KQTH…RQEN), 4394 to 4415 (EFQR…KDEA), and 4429 to 4438 (VEFDDSKSGR). The span at 4468–4477 (HNSSCETSQS) shows a compositional bias: polar residues. Residues 4478-4488 (SHDRPPAEHLN) show a composition bias toward basic and acidic residues. Residues 4629–4818 (QVLLAVDDSS…RHIEDLPETL (190 aa)) enclose the VWFA domain.

The protein belongs to the midasin family. In terms of assembly, associates with pre-60S ribosomes in the nucleoplasm.

It is found in the nucleus. It localises to the nucleolus. The protein localises to the nucleoplasm. Its function is as follows. Nuclear chaperone required for maturation and nuclear export of pre-60S ribosome subunits. Functions at successive maturation steps to remove ribosomal factors at critical transition points, first driving the exit of early pre-60S particles from the nucleolus and then driving late pre-60S particles from the nucleus. The sequence is that of Midasin (MDN1) from Giardia intestinalis (Giardia lamblia).